The sequence spans 422 residues: UDP-N-acetylglucosamine 1-carboxyvinyltransferase (422 aa).

Residue 22–23 (KN) coordinates phosphoenolpyruvate. R93 lines the UDP-N-acetyl-alpha-D-glucosamine pocket. C117 serves as the catalytic Proton donor. A 2-(S-cysteinyl)pyruvic acid O-phosphothioketal modification is found at C117. UDP-N-acetyl-alpha-D-glucosamine-binding positions include 122 to 126 (RPVDL), 162 to 165 (KVSV), D307, and I329.

This sequence belongs to the EPSP synthase family. MurA subfamily.

It localises to the cytoplasm. It carries out the reaction phosphoenolpyruvate + UDP-N-acetyl-alpha-D-glucosamine = UDP-N-acetyl-3-O-(1-carboxyvinyl)-alpha-D-glucosamine + phosphate. It functions in the pathway cell wall biogenesis; peptidoglycan biosynthesis. Cell wall formation. Adds enolpyruvyl to UDP-N-acetylglucosamine. The sequence is that of UDP-N-acetylglucosamine 1-carboxyvinyltransferase from Hamiltonella defensa subsp. Acyrthosiphon pisum (strain 5AT).